The following is a 426-amino-acid chain: UPF0761 membrane protein Nmul_A0452 (426 aa).

6 helical membrane passes run 48 to 68 (LLSLVPMLAIGLSVIAAFPAF), 106 to 126 (LTAIGIAFLGVTALALMLTID), 145 to 165 (LLIYWSVLTIGPLLIGASLSL), 187 to 207 (LLRLSPLVLTSIAFSASYLIV), 217 to 237 (AIAGGVAAAIGFEIMKEGFAF), and 255 to 275 (IPIFLLWLYLSWLMVLLGAVI).

This sequence belongs to the UPF0761 family.

Its subcellular location is the cell inner membrane. The polypeptide is UPF0761 membrane protein Nmul_A0452 (Nitrosospira multiformis (strain ATCC 25196 / NCIMB 11849 / C 71)).